The following is a 79-amino-acid chain: Small ribosomal subunit protein bS18 (79 aa).

The protein belongs to the bacterial ribosomal protein bS18 family. Part of the 30S ribosomal subunit. Forms a tight heterodimer with protein bS6.

Its function is as follows. Binds as a heterodimer with protein bS6 to the central domain of the 16S rRNA, where it helps stabilize the platform of the 30S subunit. The protein is Small ribosomal subunit protein bS18 of Micrococcus luteus (strain ATCC 4698 / DSM 20030 / JCM 1464 / CCM 169 / CCUG 5858 / IAM 1056 / NBRC 3333 / NCIMB 9278 / NCTC 2665 / VKM Ac-2230) (Micrococcus lysodeikticus).